The sequence spans 366 residues: Phospho-N-acetylmuramoyl-pentapeptide-transferase (366 aa).

10 consecutive transmembrane segments (helical) span residues 3-23, 55-75, 80-100, 118-138, 161-181, 197-217, 238-258, 262-282, 290-310, and 341-361; these read QIII…PILI, IAII…SYFA, FTAS…TGFA, AKLI…LRFP, IAFG…YVVV, LAAG…FWQF, IAVL…WNAA, IFMG…ISVV, VIIG…IAVF, and FWLI…GDWL.

Belongs to the glycosyltransferase 4 family. MraY subfamily. Mg(2+) is required as a cofactor.

Its subcellular location is the cell membrane. The catalysed reaction is UDP-N-acetyl-alpha-D-muramoyl-L-alanyl-gamma-D-glutamyl-meso-2,6-diaminopimeloyl-D-alanyl-D-alanine + di-trans,octa-cis-undecaprenyl phosphate = di-trans,octa-cis-undecaprenyl diphospho-N-acetyl-alpha-D-muramoyl-L-alanyl-D-glutamyl-meso-2,6-diaminopimeloyl-D-alanyl-D-alanine + UMP. Its pathway is cell wall biogenesis; peptidoglycan biosynthesis. Functionally, catalyzes the initial step of the lipid cycle reactions in the biosynthesis of the cell wall peptidoglycan: transfers peptidoglycan precursor phospho-MurNAc-pentapeptide from UDP-MurNAc-pentapeptide onto the lipid carrier undecaprenyl phosphate, yielding undecaprenyl-pyrophosphoryl-MurNAc-pentapeptide, known as lipid I. The chain is Phospho-N-acetylmuramoyl-pentapeptide-transferase from Corynebacterium efficiens (strain DSM 44549 / YS-314 / AJ 12310 / JCM 11189 / NBRC 100395).